The primary structure comprises 124 residues: UPF0102 protein Noca_3248 (124 aa).

This sequence belongs to the UPF0102 family.

The chain is UPF0102 protein Noca_3248 from Nocardioides sp. (strain ATCC BAA-499 / JS614).